A 71-amino-acid polypeptide reads, in one-letter code: Protein CYSTEINE-RICH TRANSMEMBRANE MODULE 4 (71 aa).

The segment covering 1-12 has biased composition (polar residues); that stretch reads MSQYSQNQSSGA. Positions 1–31 are disordered; that stretch reads MSQYSQNQSSGAYPTPPVSTGPYMTPPPLGY. Residues 14–30 are compositionally biased toward pro residues; it reads PTPPVSTGPYMTPPPLG. The chain crosses the membrane as a helical span at residues 48-64; the sequence is SKGDGFLKGCLAAMCCC.

The protein belongs to the CYSTM1 family. In terms of assembly, heterodimers. Interacts with CYSTM6, CYSTM7, CYSTM12 and WIH1/CYSTM13. As to expression, mostly expressed in roots, stems, rosette leaves and siliques and, to a lower extent, in flowers and cauline leaves.

The protein localises to the cell membrane. Its subcellular location is the cytoplasm. Functionally, involved in resistance to abiotic stress. The protein is Protein CYSTEINE-RICH TRANSMEMBRANE MODULE 4 of Arabidopsis thaliana (Mouse-ear cress).